The chain runs to 368 residues: MEMKVLILVGVRLLFLPTTVCQSGMKHVSDNSALTAESFNGNEHSFEEFPLSDIEGWTGATTTIKAKCPEESITTLHVNNATMGYLRSSLSTKVIPAIYILVFVIGVPANIVTLWKLSSRTKSICLVIFHTNLAIADLLFCVTLPFKIAYHLNGNDWVFGEVMCRVTTVAFYGNMYCAILILTCMGINRYLATVHPFTYRKLPKRNFTLLMCGVVWVMVVLYMLPLAILKQEYHLVQPGITTCHDVHDTCESPLPFQFYYFVSLAFFGFLIPFVVSVFCYTTLIHKLNAQDRKWLRYIKAVLLILVIFTICFAPTNIILIIHHANYYYSNTDSLYFMYLIALCLGSLNSCLDPFLYFIMSKIVDQLTS.

The N-terminal stretch at 1–21 (MEMKVLILVGVRLLFLPTTVC) is a signal peptide. Residues 22 to 37 (QSGMKHVSDNSALTAE) constitute a propeptide, removed for receptor activation. Residues 38 to 93 (SFNGNEHSFEEFPLSDIEGWTGATTTIKAKCPEESITTLHVNNATMGYLRSSLSTK) lie on the Extracellular side of the membrane. Residue Asn80 is glycosylated (N-linked (GlcNAc...) asparagine). A helical transmembrane segment spans residues 94 to 114 (VIPAIYILVFVIGVPANIVTL). The Cytoplasmic portion of the chain corresponds to 115-123 (WKLSSRTKS). A helical transmembrane segment spans residues 124-144 (ICLVIFHTNLAIADLLFCVTL). Over 145–166 (PFKIAYHLNGNDWVFGEVMCRV) the chain is Extracellular. A disulfide bridge links Cys164 with Cys243. The helical transmembrane segment at 167–187 (TTVAFYGNMYCAILILTCMGI) threads the bilayer. The Cytoplasmic portion of the chain corresponds to 188-208 (NRYLATVHPFTYRKLPKRNFT). The chain crosses the membrane as a helical span at residues 209-229 (LLMCGVVWVMVVLYMLPLAIL). Residues 230–257 (KQEYHLVQPGITTCHDVHDTCESPLPFQ) are Extracellular-facing. The chain crosses the membrane as a helical span at residues 258 to 278 (FYYFVSLAFFGFLIPFVVSVF). At 279–300 (CYTTLIHKLNAQDRKWLRYIKA) the chain is on the cytoplasmic side. Residues 301–321 (VLLILVIFTICFAPTNIILII) traverse the membrane as a helical segment. Over 322–338 (HHANYYYSNTDSLYFMY) the chain is Extracellular. The chain crosses the membrane as a helical span at residues 339–359 (LIALCLGSLNSCLDPFLYFIM). The Cytoplasmic segment spans residues 360–368 (SKIVDQLTS).

It belongs to the G-protein coupled receptor 1 family. In terms of assembly, interacts with INSC/inscuteable and GPSM2. In terms of processing, a proteolytic cleavage generates a new N-terminus that functions as a tethered ligand.

The protein resides in the cell membrane. In terms of biological role, receptor for activated thrombin coupled to G proteins that stimulate phosphoinositide hydrolysis. In Rattus norvegicus (Rat), this protein is Proteinase-activated receptor 3 (F2rl2).